The chain runs to 223 residues: Deoxyribose-phosphate aldolase 1 (223 aa).

Aspartate 91 (proton donor/acceptor) is an active-site residue. Residue lysine 154 is the Schiff-base intermediate with acetaldehyde of the active site. The Proton donor/acceptor role is filled by lysine 183.

Belongs to the DeoC/FbaB aldolase family. DeoC type 1 subfamily.

It is found in the cytoplasm. It catalyses the reaction 2-deoxy-D-ribose 5-phosphate = D-glyceraldehyde 3-phosphate + acetaldehyde. The protein operates within carbohydrate degradation; 2-deoxy-D-ribose 1-phosphate degradation; D-glyceraldehyde 3-phosphate and acetaldehyde from 2-deoxy-alpha-D-ribose 1-phosphate: step 2/2. Catalyzes a reversible aldol reaction between acetaldehyde and D-glyceraldehyde 3-phosphate to generate 2-deoxy-D-ribose 5-phosphate. The sequence is that of Deoxyribose-phosphate aldolase 1 from Bacillus licheniformis (strain ATCC 14580 / DSM 13 / JCM 2505 / CCUG 7422 / NBRC 12200 / NCIMB 9375 / NCTC 10341 / NRRL NRS-1264 / Gibson 46).